Reading from the N-terminus, the 416-residue chain is Phosphatidylinositol 5-phosphate 4-kinase type-2 gamma (416 aa).

In terms of domain architecture, PIPK spans 38-415 (ASDPMLSVFM…RFREFISNIF (378 aa)).

Phosphorylated, phosphorylation is induced by EGF.

The protein resides in the endoplasmic reticulum. It localises to the cytoplasm. It catalyses the reaction a 1,2-diacyl-sn-glycero-3-phospho-(1D-myo-inositol-5-phosphate) + ATP = a 1,2-diacyl-sn-glycero-3-phospho-(1D-myo-inositol-4,5-bisphosphate) + ADP + H(+). The catalysed reaction is 1,2-dihexadecanoyl-sn-glycero-3-phospho-(1D-myo-inositol-5-phosphate) + ATP = 1,2-dihexadecanoyl-sn-glycero-3-phospho-(1D-myo-inositol-4,5-bisphosphate) + ADP + H(+). It carries out the reaction 1,2-dihexadecanoyl-sn-glycero-3-phospho-(1D-myo-inositol-5-phosphate) + GTP = 1,2-dihexadecanoyl-sn-glycero-3-phospho-(1D-myo-inositol-4,5-bisphosphate) + GDP + H(+). Its function is as follows. Phosphatidylinositol 5-phosphate 4-kinase with low enzymatic activity. May be a GTP sensor, has higher GTP-dependent kinase activity than ATP-dependent kinase activity. The polypeptide is Phosphatidylinositol 5-phosphate 4-kinase type-2 gamma (pip4k2c) (Danio rerio (Zebrafish)).